Here is a 428-residue protein sequence, read N- to C-terminus: Glucose-1-phosphate adenylyltransferase (428 aa).

Residues Tyr-114, Gly-179, 194 to 195, and Ser-212 contribute to the alpha-D-glucose 1-phosphate site; that span reads EK.

It belongs to the bacterial/plant glucose-1-phosphate adenylyltransferase family. In terms of assembly, homotetramer.

It catalyses the reaction alpha-D-glucose 1-phosphate + ATP + H(+) = ADP-alpha-D-glucose + diphosphate. It functions in the pathway glycan biosynthesis; glycogen biosynthesis. Its function is as follows. Involved in the biosynthesis of ADP-glucose, a building block required for the elongation reactions to produce glycogen. Catalyzes the reaction between ATP and alpha-D-glucose 1-phosphate (G1P) to produce pyrophosphate and ADP-Glc. The polypeptide is Glucose-1-phosphate adenylyltransferase (Yersinia pseudotuberculosis serotype O:1b (strain IP 31758)).